The sequence spans 330 residues: Aspartate--ammonia ligase (330 aa).

It belongs to the class-II aminoacyl-tRNA synthetase family. AsnA subfamily.

Its subcellular location is the cytoplasm. It catalyses the reaction L-aspartate + NH4(+) + ATP = L-asparagine + AMP + diphosphate + H(+). Its pathway is amino-acid biosynthesis; L-asparagine biosynthesis; L-asparagine from L-aspartate (ammonia route): step 1/1. The sequence is that of Aspartate--ammonia ligase from Treponema pallidum (strain Nichols).